A 174-amino-acid polypeptide reads, in one-letter code: Crossover junction endodeoxyribonuclease RuvC (174 aa).

Catalysis depends on residues Asp8, Glu69, and Asp141. Positions 8, 69, and 141 each coordinate Mg(2+).

The protein belongs to the RuvC family. In terms of assembly, homodimer which binds Holliday junction (HJ) DNA. The HJ becomes 2-fold symmetrical on binding to RuvC with unstacked arms; it has a different conformation from HJ DNA in complex with RuvA. In the full resolvosome a probable DNA-RuvA(4)-RuvB(12)-RuvC(2) complex forms which resolves the HJ. Mg(2+) is required as a cofactor.

The protein resides in the cytoplasm. The catalysed reaction is Endonucleolytic cleavage at a junction such as a reciprocal single-stranded crossover between two homologous DNA duplexes (Holliday junction).. In terms of biological role, the RuvA-RuvB-RuvC complex processes Holliday junction (HJ) DNA during genetic recombination and DNA repair. Endonuclease that resolves HJ intermediates. Cleaves cruciform DNA by making single-stranded nicks across the HJ at symmetrical positions within the homologous arms, yielding a 5'-phosphate and a 3'-hydroxyl group; requires a central core of homology in the junction. The consensus cleavage sequence is 5'-(A/T)TT(C/G)-3'. Cleavage occurs on the 3'-side of the TT dinucleotide at the point of strand exchange. HJ branch migration catalyzed by RuvA-RuvB allows RuvC to scan DNA until it finds its consensus sequence, where it cleaves and resolves the cruciform DNA. This chain is Crossover junction endodeoxyribonuclease RuvC, found in Xanthomonas euvesicatoria pv. vesicatoria (strain 85-10) (Xanthomonas campestris pv. vesicatoria).